Reading from the N-terminus, the 60-residue chain is DNA-directed RNA polymerase subunit Rpo6 (60 aa).

The protein belongs to the archaeal Rpo6/eukaryotic RPB6 RNA polymerase subunit family. Part of the RNA polymerase complex.

The protein localises to the cytoplasm. The catalysed reaction is RNA(n) + a ribonucleoside 5'-triphosphate = RNA(n+1) + diphosphate. In terms of biological role, DNA-dependent RNA polymerase (RNAP) catalyzes the transcription of DNA into RNA using the four ribonucleoside triphosphates as substrates. The protein is DNA-directed RNA polymerase subunit Rpo6 of Picrophilus torridus (strain ATCC 700027 / DSM 9790 / JCM 10055 / NBRC 100828 / KAW 2/3).